Here is a 1368-residue protein sequence, read N- to C-terminus: DNA-directed RNA polymerase subunit beta (1368 aa).

Belongs to the RNA polymerase beta chain family. In terms of assembly, the RNAP catalytic core consists of 2 alpha, 1 beta, 1 beta' and 1 omega subunit. When a sigma factor is associated with the core the holoenzyme is formed, which can initiate transcription.

It carries out the reaction RNA(n) + a ribonucleoside 5'-triphosphate = RNA(n+1) + diphosphate. Functionally, DNA-dependent RNA polymerase catalyzes the transcription of DNA into RNA using the four ribonucleoside triphosphates as substrates. In Legionella pneumophila subsp. pneumophila (strain Philadelphia 1 / ATCC 33152 / DSM 7513), this protein is DNA-directed RNA polymerase subunit beta.